Reading from the N-terminus, the 445-residue chain is MREVISINVGQAGCQIGNACWELYSLEHGIKEDGHLEDGLSKPKGGEEGFSTFFHETGYGKFVPRAIYVDLEPNVIDEVRTGRFKELFHPEQLINGKEDAANNYARGHYTVGREIVDEVEERIRKMADQCDGLQGFLFTHSLGGGTGSGLGSLLLENLSYEYGKKSKLEFAVYPAPQLSTSVVEPYNTVLTTHTTLEHADCTFMVDNEAIYDICKRNLGISRPSFSNLNGLIAQVISSVTASLRFDGSLNVDLNEFQTNLVPYPRIHFPLVSYAPILSKKRATHESNSVSEITNACFEPGNQMVKCDPTKGKYMANCLLYRGDVVTRDVQRAVEQVKNKKTVQMVDWCPTGFKIGICYEPPSVIPSSELANVDRAVCMLSNTTAIADAWKRIDQKFDLMYAKRAFVHWYVGEGMEEGEFTEAREDLAALERDYIEVGADSYAEEF.

Positions 11, 72, 141, 145, 146, 180, 207, and 229 each coordinate GTP. Glu72 lines the Mg(2+) pocket. The active site involves Glu255.

It belongs to the tubulin family. Dimer of alpha and beta chains. A typical microtubule is a hollow water-filled tube with an outer diameter of 25 nm and an inner diameter of 15 nM. Alpha-beta heterodimers associate head-to-tail to form protofilaments running lengthwise along the microtubule wall with the beta-tubulin subunit facing the microtubule plus end conferring a structural polarity. Microtubules usually have 13 protofilaments but different protofilament numbers can be found in some organisms and specialized cells. Interacts with NUM1. Mg(2+) serves as cofactor.

The protein resides in the cytoplasm. Its subcellular location is the cytoskeleton. It carries out the reaction GTP + H2O = GDP + phosphate + H(+). Tubulin is the major constituent of microtubules, a cylinder consisting of laterally associated linear protofilaments composed of alpha- and beta-tubulin heterodimers. Microtubules grow by the addition of GTP-tubulin dimers to the microtubule end, where a stabilizing cap forms. Below the cap, tubulin dimers are in GDP-bound state, owing to GTPase activity of alpha-tubulin. The sequence is that of Tubulin alpha-3 chain (TUB3) from Saccharomyces cerevisiae (strain ATCC 204508 / S288c) (Baker's yeast).